A 263-amino-acid polypeptide reads, in one-letter code: MKVAVSGFKGRMGHEVVKTILREEDLELVAVLDHEPKEKNIREIVEFSSLDVPVYGDLSEMLEEIKPDCVVDFTIPKVGYSNTKTILEHSVRAVVGTTGFTPEQISELKSIAESKKIGALIAPNFAVGAVLMMQFAQKAAKYFPNVEIIELHHDNKLDAPSGTAVKTAEMMAETREFVKQGAADEVELIEGARGGEYEGMRIHSVRLPGLVAHQEVIFGAEGQGLTIRHDSYDRISFMSGVALSVRKTKELETLIYGLENILD.

NAD(+)-binding positions include 7-12 (GFKGRM), 96-98 (GTT), and 122-125 (APNF). Histidine 152 (proton donor/acceptor) is an active-site residue. Histidine 153 lines the (S)-2,3,4,5-tetrahydrodipicolinate pocket. Lysine 156 serves as the catalytic Proton donor. 162–163 (GT) serves as a coordination point for (S)-2,3,4,5-tetrahydrodipicolinate.

Belongs to the DapB family.

It is found in the cytoplasm. It catalyses the reaction (S)-2,3,4,5-tetrahydrodipicolinate + NAD(+) + H2O = (2S,4S)-4-hydroxy-2,3,4,5-tetrahydrodipicolinate + NADH + H(+). The catalysed reaction is (S)-2,3,4,5-tetrahydrodipicolinate + NADP(+) + H2O = (2S,4S)-4-hydroxy-2,3,4,5-tetrahydrodipicolinate + NADPH + H(+). Its pathway is amino-acid biosynthesis; L-lysine biosynthesis via DAP pathway; (S)-tetrahydrodipicolinate from L-aspartate: step 4/4. In terms of biological role, catalyzes the conversion of 4-hydroxy-tetrahydrodipicolinate (HTPA) to tetrahydrodipicolinate. The chain is 4-hydroxy-tetrahydrodipicolinate reductase from Listeria innocua serovar 6a (strain ATCC BAA-680 / CLIP 11262).